Reading from the N-terminus, the 306-residue chain is Replication termination factor 2 (306 aa).

Residues 192–306 (RAKLEKKTKK…HWVTHTSYCF (115 aa)) form a disordered region. Residues 226 to 240 (GKSEEADPDPREKKS) show a composition bias toward basic and acidic residues. Ser287 bears the Phosphoserine mark.

Belongs to the rtf2 family. In terms of assembly, interacts with DDI2; probably also interacts with DDI1. In terms of processing, undergoes proteasomal degradation, via DDI1 and DDI2. Removal from stalled replisomes and degradation are required for genome stability.

The protein localises to the chromosome. In terms of biological role, replication termination factor which is a component of the elongating replisome. Required for ATR pathway signaling upon DNA damage and has a positive activity during DNA replication. Might function to facilitate fork pausing at replication fork barriers like the rDNA. May be globally required to stimulate ATR signaling after the fork stalls or encounters a lesion. Interacts with nascent DNA. This Rattus norvegicus (Rat) protein is Replication termination factor 2.